Reading from the N-terminus, the 138-residue chain is Class I hydrophobin 3 (138 aa).

An N-terminal signal peptide occupies residues 1–16; sequence MRFFLAITALVAAVTA. 4 cysteine pairs are disulfide-bonded: cysteine 40/cysteine 111, cysteine 48/cysteine 105, cysteine 49/cysteine 87, and cysteine 112/cysteine 130.

Belongs to the fungal hydrophobin family. In terms of assembly, self-assembles to form functional amyloid fibrils called rodlets. Self-assembly into fibrillar rodlets occurs spontaneously at hydrophobic:hydrophilic interfaces and the rodlets further associate laterally to form amphipathic monolayers.

It localises to the secreted. Its subcellular location is the cell wall. In terms of biological role, aerial growth, conidiation, and dispersal of filamentous fungi in the environment rely upon a capability of their secreting small amphipathic proteins called hydrophobins (HPBs) with low sequence identity. Class I can self-assemble into an outermost layer of rodlet bundles on aerial cell surfaces, conferring cellular hydrophobicity that supports fungal growth, development and dispersal; whereas Class II form highly ordered films at water-air interfaces through intermolecular interactions but contribute nothing to the rodlet structure. HYD3 is a class I hydrophobin that contributes to the formation of aerial hyphae and fruiting bodies. The polypeptide is Class I hydrophobin 3 (Cordyceps militaris (Caterpillar fungus)).